The sequence spans 491 residues: MSDPTEHPEILQDPSSSAPVQGRTDLPPGWLEVTSMDMDAQGVARRPDGKVVFIDGALPFEWVSASTHRKKNNWEQASLTAIHRESPQRVRPGCPHFGLHAGACGGCKMQHLHVGAQVAVKQRVLEDNLWHLGKVKAETVLRPIEGPAWGYRYRARLAVRHVEKKGKVLVGFHERKSRYIADMEVCPVLPPHVSAMLLPLRALIASMDARDTCPQIELACGDDVTALVLRHLEPLSEADLGRLRSFAAAHGVQWWLQPKGPDTVHLLDEGGPQLNYALPDFGITMPFKPTDFTQVNPHINRVLVTRALRLLDAGRTDRVIDWFCGLGNFTLPIATQAREVVGIEGSEALVARSRENYRKNQDDRPQGQALAPATFVARNLFEMTPEMLIADGVADKWLVDPPREGAFALAKALADIHQARIGAEDAPALPASAEGWTPPQRIVYVSCNPATLARDAGLLVHQAGYRCVAAGVVNMFPHTAHVESMAVFERV.

The span at 1–10 shows a compositional bias: basic and acidic residues; the sequence is MSDPTEHPEI. A disordered region spans residues 1-28; it reads MSDPTEHPEILQDPSSSAPVQGRTDLPP. In terms of domain architecture, TRAM spans 18–81; it reads APVQGRTDLP…NNWEQASLTA (64 aa). The [4Fe-4S] cluster site is built by C94, C104, C107, and C186. Q294, F323, N328, E344, N379, and D400 together coordinate S-adenosyl-L-methionine. C447 acts as the Nucleophile in catalysis.

It belongs to the class I-like SAM-binding methyltransferase superfamily. RNA M5U methyltransferase family. RlmD subfamily.

It catalyses the reaction uridine(1939) in 23S rRNA + S-adenosyl-L-methionine = 5-methyluridine(1939) in 23S rRNA + S-adenosyl-L-homocysteine + H(+). Catalyzes the formation of 5-methyl-uridine at position 1939 (m5U1939) in 23S rRNA. The protein is 23S rRNA (uracil(1939)-C(5))-methyltransferase RlmD of Paracidovorax citrulli (strain AAC00-1) (Acidovorax citrulli).